Here is a 412-residue protein sequence, read N- to C-terminus: Multifunctional CCA protein (412 aa).

ATP is bound by residues Gly-8 and Arg-11. Positions 8 and 11 each coordinate CTP. Positions 21 and 23 each coordinate Mg(2+). Positions 91, 137, and 140 each coordinate ATP. Positions 91, 137, and 140 each coordinate CTP. Residues Thr-228–Trp-329 enclose the HD domain.

Belongs to the tRNA nucleotidyltransferase/poly(A) polymerase family. Bacterial CCA-adding enzyme type 1 subfamily. In terms of assembly, monomer. Can also form homodimers and oligomers. The cofactor is Mg(2+). It depends on Ni(2+) as a cofactor.

It catalyses the reaction a tRNA precursor + 2 CTP + ATP = a tRNA with a 3' CCA end + 3 diphosphate. The catalysed reaction is a tRNA with a 3' CCA end + 2 CTP + ATP = a tRNA with a 3' CCACCA end + 3 diphosphate. In terms of biological role, catalyzes the addition and repair of the essential 3'-terminal CCA sequence in tRNAs without using a nucleic acid template. Adds these three nucleotides in the order of C, C, and A to the tRNA nucleotide-73, using CTP and ATP as substrates and producing inorganic pyrophosphate. tRNA 3'-terminal CCA addition is required both for tRNA processing and repair. Also involved in tRNA surveillance by mediating tandem CCA addition to generate a CCACCA at the 3' terminus of unstable tRNAs. While stable tRNAs receive only 3'-terminal CCA, unstable tRNAs are marked with CCACCA and rapidly degraded. This is Multifunctional CCA protein from Escherichia coli (strain SE11).